Here is a 542-residue protein sequence, read N- to C-terminus: Beta-amylase 2, chloroplastic (542 aa).

A chloroplast-targeting transit peptide spans 1 to 55 (MAIRLNHSVIPVSVKLGAPTRVSARSSLPFSVGDWRGVSTFSGARPLVLAKVKLR). Positions 136, 176, and 184 each coordinate substrate. E269 (proton donor) is an active-site residue. The substrate site is built by K377, H382, and T424. Residue E465 is the Proton acceptor of the active site. Substrate-binding positions include 466-467 (NA) and R501.

Belongs to the glycosyl hydrolase 14 family.

It localises to the plastid. It is found in the chloroplast. The enzyme catalyses Hydrolysis of (1-&gt;4)-alpha-D-glucosidic linkages in polysaccharides so as to remove successive maltose units from the non-reducing ends of the chains.. Its activity is regulated as follows. Redox regulation; active in reducing conditions, inactive in oxidizing conditions. Low beta-amylase activity. Interacts poorly with starch or other alpha-1,4-glucan. The protein is Beta-amylase 2, chloroplastic (BAM2) of Arabidopsis thaliana (Mouse-ear cress).